A 346-amino-acid polypeptide reads, in one-letter code: Holliday junction branch migration complex subunit RuvB (346 aa).

The interval 1 to 182 (MSEAARLIAP…FGIPVRLNFY (182 aa)) is large ATPase domain (RuvB-L). ATP contacts are provided by residues Arg-22, Gly-63, Lys-66, Thr-67, Thr-68, 129–131 (EDF), Arg-172, Tyr-182, and Arg-219. Thr-67 contributes to the Mg(2+) binding site. Residues 183-253 (TVEELELIVR…IADEALTRLL (71 aa)) form a small ATPAse domain (RuvB-S) region. A head domain (RuvB-H) region spans residues 256–346 (SMGLDQLDRR…SQFRLTLEDD (91 aa)). 3 residues coordinate DNA: Arg-292, Arg-311, and Arg-316.

The protein belongs to the RuvB family. As to quaternary structure, homohexamer. Forms an RuvA(8)-RuvB(12)-Holliday junction (HJ) complex. HJ DNA is sandwiched between 2 RuvA tetramers; dsDNA enters through RuvA and exits via RuvB. An RuvB hexamer assembles on each DNA strand where it exits the tetramer. Each RuvB hexamer is contacted by two RuvA subunits (via domain III) on 2 adjacent RuvB subunits; this complex drives branch migration. In the full resolvosome a probable DNA-RuvA(4)-RuvB(12)-RuvC(2) complex forms which resolves the HJ.

The protein resides in the cytoplasm. It catalyses the reaction ATP + H2O = ADP + phosphate + H(+). Its function is as follows. The RuvA-RuvB-RuvC complex processes Holliday junction (HJ) DNA during genetic recombination and DNA repair, while the RuvA-RuvB complex plays an important role in the rescue of blocked DNA replication forks via replication fork reversal (RFR). RuvA specifically binds to HJ cruciform DNA, conferring on it an open structure. The RuvB hexamer acts as an ATP-dependent pump, pulling dsDNA into and through the RuvAB complex. RuvB forms 2 homohexamers on either side of HJ DNA bound by 1 or 2 RuvA tetramers; 4 subunits per hexamer contact DNA at a time. Coordinated motions by a converter formed by DNA-disengaged RuvB subunits stimulates ATP hydrolysis and nucleotide exchange. Immobilization of the converter enables RuvB to convert the ATP-contained energy into a lever motion, pulling 2 nucleotides of DNA out of the RuvA tetramer per ATP hydrolyzed, thus driving DNA branch migration. The RuvB motors rotate together with the DNA substrate, which together with the progressing nucleotide cycle form the mechanistic basis for DNA recombination by continuous HJ branch migration. Branch migration allows RuvC to scan DNA until it finds its consensus sequence, where it cleaves and resolves cruciform DNA. The protein is Holliday junction branch migration complex subunit RuvB of Rhizobium meliloti (strain 1021) (Ensifer meliloti).